A 70-amino-acid chain; its full sequence is Small ribosomal subunit protein bS21 (70 aa).

Belongs to the bacterial ribosomal protein bS21 family.

The sequence is that of Small ribosomal subunit protein bS21 from Methylobacillus flagellatus (strain ATCC 51484 / DSM 6875 / VKM B-1610 / KT).